A 248-amino-acid polypeptide reads, in one-letter code: NAD-dependent protein deacylase 2 (248 aa).

Residues 1–248 (MLQAASALRH…HVMAELISHI (248 aa)) form the Deacetylase sirtuin-type domain. NAD(+) contacts are provided by residues 19 to 38 (GAGL…GGLY) and 102 to 105 (QNVD). The active-site Proton acceptor is the His-122. Residues Cys-130, Cys-133, Cys-152, and Cys-155 each coordinate Zn(2+). Residues 193 to 195 (GTT), 219 to 221 (NPQ), and Ala-237 contribute to the NAD(+) site.

It belongs to the sirtuin family. Class III subfamily. The cofactor is Zn(2+).

It is found in the cytoplasm. It carries out the reaction N(6)-acetyl-L-lysyl-[protein] + NAD(+) + H2O = 2''-O-acetyl-ADP-D-ribose + nicotinamide + L-lysyl-[protein]. NAD-dependent protein deacetylase which modulates the activities of several proteins which are inactive in their acetylated form. This chain is NAD-dependent protein deacylase 2 (cobB2), found in Pseudomonas syringae pv. tomato (strain ATCC BAA-871 / DC3000).